We begin with the raw amino-acid sequence, 277 residues long: Trypsin-2 (277 aa).

The first 19 residues, 1-19 (MSNKIAILLLAVVVAVVAC), serve as a signal peptide directing secretion. Residues 20-50 (AQAQPSRRHHLVHPLLPRFLPRLHRDSNGHR) constitute a propeptide, activation peptide. Residues 51–276 (VVGGFQIDVS…VRDWVRENSG (226 aa)) form the Peptidase S1 domain. An intrachain disulfide couples Cys76 to Cys92. Active-site charge relay system residues include His91 and Asp136. Disulfide bonds link Cys201-Cys217 and Cys228-Cys252. The active-site Charge relay system is Ser232.

The protein belongs to the peptidase S1 family. Midgut.

The protein resides in the secreted. It catalyses the reaction Preferential cleavage: Arg-|-Xaa, Lys-|-Xaa.. Its function is as follows. Major function may be to aid in digestion of the blood meal. The chain is Trypsin-2 (TRYP2) from Anopheles gambiae (African malaria mosquito).